Here is a 575-residue protein sequence, read N- to C-terminus: DNA polymerase lambda (575 aa).

Residues 36–132 (EAEEWLSSLR…RLVDVAGFSI (97 aa)) form the BRCT domain. Positions 160–205 (ALLQTALPPPPSPTRPVSPPQKTKEAPNTQAQPISDDEASDGEETQ) are disordered. Pro residues predominate over residues 166–178 (LPPPPSPTRPVSP). The segment covering 194–203 (SDDEASDGEE) has biased composition (acidic residues). The interval 265–279 (KAYSVQGDKWRALGY) is DNA-binding. Residue K312 is the Schiff-base intermediate with DNA of the active site. Residues 345 to 348 (GTKT) form a DNA-binding region. DCTP contacts are provided by residues R386, 417–420 (SYRR), and 426–429 (GDVD). The involved in primer binding stretch occupies residues 420–429 (RGKATCGDVD). 3 residues coordinate Mn(2+): D427, D429, and D490. The interval 466–505 (ENGQQQKYLGVCRLPGPGWRHRRLDIIVVPYSEFACALLY) is DNA-binding. N513 is a binding site for dCTP.

It belongs to the DNA polymerase type-X family. In terms of assembly, interacts with PCNA. Interacts with PAXX; promoting POLL recruitment to double-strand breaks (DSBs) and stimulation of the end-filling activity of POLL. Interacts with XRCC4; promoting POLL recruitment to double-strand breaks (DSBs) and stimulation of the end-filling activity of POLL. Interacts with NHEJ1/XLF; promoting POLL recruitment to double-strand breaks (DSBs) and stimulation of the end-filling activity of POLL. It depends on Mn(2+) as a cofactor.

It localises to the nucleus. The enzyme catalyses DNA(n) + a 2'-deoxyribonucleoside 5'-triphosphate = DNA(n+1) + diphosphate. DNA polymerase that functions in several pathways of DNA repair. Involved in base excision repair (BER) responsible for repair of lesions that give rise to abasic (AP) sites in DNA. Also contributes to DNA double-strand break repair by non-homologous end joining and homologous recombination. Has both template-dependent and template-independent (terminal transferase) DNA polymerase activities. Also has a 5'-deoxyribose-5-phosphate lyase (dRP lyase) activity. In Macaca fascicularis (Crab-eating macaque), this protein is DNA polymerase lambda.